Here is a 548-residue protein sequence, read N- to C-terminus: SH2B adapter protein 3 (548 aa).

Residues 1–11 are compositionally biased toward polar residues; sequence MNEPTVQPSRT. 3 disordered regions span residues 1-25, 78-108, and 128-160; these read MNEP…RGWS, SLAG…DLGP, and RSAG…LLPW. Over residues 12-21 the composition is skewed to low complexity; sequence SSAPASPASP. Phosphoserine occurs at positions 13, 102, and 129. The span at 137-148 shows a compositional bias: polar residues; the sequence is TSDTNDIDTTAA. Residues 168–279 form the PH domain; the sequence is EALKEVVLRY…WLAELRASTG (112 aa). The interval 290 to 313 is disordered; the sequence is PLSLAAEPGPARSPRGSTDSLDQG. Ser-302 carries the post-translational modification Phosphoserine. The SH2 domain occupies 336 to 434; it reads WFHGPISRVR…ACDVRLSGYV (99 aa).

It belongs to the SH2B adapter family. In terms of processing, tyrosine phosphorylated.

In terms of biological role, links T-cell receptor activation signal to phospholipase C-gamma-1, GRB2 and phosphatidylinositol 3-kinase. The polypeptide is SH2B adapter protein 3 (Sh2b3) (Mus musculus (Mouse)).